Reading from the N-terminus, the 214-residue chain is GTP-binding nuclear protein Ran (214 aa).

The 165-residue stretch at 6 to 170 folds into the Small GTPase Ran-type domain; sequence YIPQYKLILV…LWLARRLSNQ (165 aa). Position 17-24 (17-24) interacts with GTP; that stretch reads DGGVGKTT. Residues 36–44 are switch-I; sequence KKYIPTLGV. Residues glycine 67, 121 to 124, and 149 to 151 each bind GTP; these read NKVD and SAR. A switch-II region spans residues 67 to 83; sequence GQEKFGGLRDGYYIKSD.

This sequence belongs to the small GTPase superfamily. Ran family. Found in a nuclear export complex with RanGTP, exportin and pre-miRNA.

The protein localises to the nucleus. Its function is as follows. GTP-binding protein involved in nucleocytoplasmic transport. Required for the import of protein into the nucleus and also for RNA export. Involved in chromatin condensation and control of cell cycle. The sequence is that of GTP-binding nuclear protein Ran from Plasmodium falciparum.